A 234-amino-acid polypeptide reads, in one-letter code: Leucyl/phenylalanyl-tRNA--protein transferase (234 aa).

It belongs to the L/F-transferase family.

The protein localises to the cytoplasm. It carries out the reaction N-terminal L-lysyl-[protein] + L-leucyl-tRNA(Leu) = N-terminal L-leucyl-L-lysyl-[protein] + tRNA(Leu) + H(+). It catalyses the reaction N-terminal L-arginyl-[protein] + L-leucyl-tRNA(Leu) = N-terminal L-leucyl-L-arginyl-[protein] + tRNA(Leu) + H(+). The enzyme catalyses L-phenylalanyl-tRNA(Phe) + an N-terminal L-alpha-aminoacyl-[protein] = an N-terminal L-phenylalanyl-L-alpha-aminoacyl-[protein] + tRNA(Phe). Functionally, functions in the N-end rule pathway of protein degradation where it conjugates Leu, Phe and, less efficiently, Met from aminoacyl-tRNAs to the N-termini of proteins containing an N-terminal arginine or lysine. This Enterobacter sp. (strain 638) protein is Leucyl/phenylalanyl-tRNA--protein transferase.